Consider the following 312-residue polypeptide: Formate dehydrogenase iron-sulfur subunit (312 aa).

4 4Fe-4S ferredoxin-type domains span residues 35–65 (IAKL…SDIN), 97–129 (LEWL…QYAN), 130–159 (GIVD…MNPE), and 164–195 (YKCT…FGSK). 16 residues coordinate [4Fe-4S] cluster: Cys44, Cys47, Cys50, Cys54, Cys106, Cys109, Cys114, Cys118, Cys139, Cys142, Cys145, Cys149, Cys166, Cys169, Cys181, and Cys185.

In terms of assembly, formate dehydrogenase is a membrane-bound complex, formed by subunits alpha, beta and gamma. Requires [4Fe-4S] cluster as cofactor.

It localises to the cell membrane. Functionally, allows to use formate as major electron donor during aerobic respiration. The beta chain is an electron transfer unit containing 4 cysteine clusters involved in the formation of iron-sulfur centers. Electrons are transferred from the gamma chain to the molybdenum cofactor of the alpha subunit. This chain is Formate dehydrogenase iron-sulfur subunit (fdxH), found in Haemophilus influenzae (strain ATCC 51907 / DSM 11121 / KW20 / Rd).